The primary structure comprises 158 residues: Low molecular weight phosphotyrosine protein phosphatase (158 aa).

Position 2 is an N-acetylalanine (Ala2). Catalysis depends on Cys13, which acts as the Nucleophile. The active site involves Arg19. Residue Asp130 is the Proton donor of the active site. 2 positions are modified to phosphotyrosine: Tyr132 and Tyr133.

This sequence belongs to the low molecular weight phosphotyrosine protein phosphatase family.

Its subcellular location is the cytoplasm. The enzyme catalyses O-phospho-L-tyrosyl-[protein] + H2O = L-tyrosyl-[protein] + phosphate. It carries out the reaction a phosphate monoester + H2O = an alcohol + phosphate. Its function is as follows. Acts on tyrosine phosphorylated proteins, low-MW aryl phosphates and natural and synthetic acyl phosphates. This chain is Low molecular weight phosphotyrosine protein phosphatase (ACP1), found in Gallus gallus (Chicken).